The following is a 332-amino-acid chain: L-lactate dehydrogenase A chain (332 aa).

NAD(+) contacts are provided by residues 29–57 (GMVG…MEDK) and R99. Residues R106, N138, and R169 each contribute to the substrate site. N138 serves as a coordination point for NAD(+). H193 functions as the Proton acceptor in the catalytic mechanism. Residue T248 participates in substrate binding.

Belongs to the LDH/MDH superfamily. LDH family. Homotetramer.

Its subcellular location is the cytoplasm. It carries out the reaction (S)-lactate + NAD(+) = pyruvate + NADH + H(+). The protein operates within fermentation; pyruvate fermentation to lactate; (S)-lactate from pyruvate: step 1/1. Interconverts simultaneously and stereospecifically pyruvate and lactate with concomitant interconversion of NADH and NAD(+). The protein is L-lactate dehydrogenase A chain (ldha) of Gillichthys seta (Shortjaw mudsucker).